Consider the following 221-residue polypeptide: MTNDPDAELIEAGRKLFAGDWQFFWASPSIETLPPMQGIEIALAGRSNVGKSSLINALTGRNALARTSHTPGRTQELIFFKGPGPLDAQTPELRLVDMPGYGYASAPKTKIASWTTLIHRYLLGRANLARVYVLIDSRHGFKDADDEVLTTLDKSAVSYQIVLTKTDQVKKSALDETMAAMAEKLRKHPAAYPEMLVTSSRDGAGMAEMRAAIVKLLRERA.

The region spanning 37-219 is the EngB-type G domain; that stretch reads QGIEIALAGR…RAAIVKLLRE (183 aa). GTP-binding positions include 45 to 52, 72 to 76, 97 to 100, 164 to 167, and 198 to 200; these read GRSNVGKS, GRTQE, DMPG, TKTD, and TSS. Serine 52 and threonine 74 together coordinate Mg(2+).

The protein belongs to the TRAFAC class TrmE-Era-EngA-EngB-Septin-like GTPase superfamily. EngB GTPase family. Requires Mg(2+) as cofactor.

In terms of biological role, necessary for normal cell division and for the maintenance of normal septation. The protein is Probable GTP-binding protein EngB of Afipia carboxidovorans (strain ATCC 49405 / DSM 1227 / KCTC 32145 / OM5) (Oligotropha carboxidovorans).